Reading from the N-terminus, the 439-residue chain is 23S rRNA (uracil(1939)-C(5))-methyltransferase RlmD (439 aa).

The region spanning 10–68 (KSTQPQRIEFTVDSLDHHCVGIGRHQGKAIFIEGALPGEQVKARILDDKKQYAHAALQQ) is the TRAM domain. 4 residues coordinate [4Fe-4S] cluster: Cys81, Cys87, Cys90, and Cys169. Residues Gln273, Phe302, Asn307, Glu323, Asp350, and Asp371 each coordinate S-adenosyl-L-methionine. Residue Cys397 is the Nucleophile of the active site.

It belongs to the class I-like SAM-binding methyltransferase superfamily. RNA M5U methyltransferase family. RlmD subfamily.

The catalysed reaction is uridine(1939) in 23S rRNA + S-adenosyl-L-methionine = 5-methyluridine(1939) in 23S rRNA + S-adenosyl-L-homocysteine + H(+). In terms of biological role, catalyzes the formation of 5-methyl-uridine at position 1939 (m5U1939) in 23S rRNA. This Aeromonas salmonicida (strain A449) protein is 23S rRNA (uracil(1939)-C(5))-methyltransferase RlmD.